The sequence spans 277 residues: Inorganic pyrophosphatase (277 aa).

Diphosphate is bound at residue arginine 80. Positions 117, 122, and 154 each coordinate Mg(2+).

This sequence belongs to the PPase family. Mg(2+) is required as a cofactor.

It localises to the cytoplasm. The catalysed reaction is diphosphate + H2O = 2 phosphate + H(+). Functionally, involved in osmoadaptation. This chain is Inorganic pyrophosphatase (IPP1), found in Encephalitozoon cuniculi (strain GB-M1) (Microsporidian parasite).